A 51-amino-acid polypeptide reads, in one-letter code: Large ribosomal subunit protein eL39 (51 aa).

This sequence belongs to the eukaryotic ribosomal protein eL39 family.

The protein is Large ribosomal subunit protein eL39 of Picrophilus torridus (strain ATCC 700027 / DSM 9790 / JCM 10055 / NBRC 100828 / KAW 2/3).